The following is a 156-amino-acid chain: Small ribosomal subunit protein uS7 (156 aa).

The protein belongs to the universal ribosomal protein uS7 family. As to quaternary structure, part of the 30S ribosomal subunit. Contacts proteins S9 and S11.

One of the primary rRNA binding proteins, it binds directly to 16S rRNA where it nucleates assembly of the head domain of the 30S subunit. Is located at the subunit interface close to the decoding center, probably blocks exit of the E-site tRNA. The sequence is that of Small ribosomal subunit protein uS7 from Methylorubrum populi (strain ATCC BAA-705 / NCIMB 13946 / BJ001) (Methylobacterium populi).